The chain runs to 309 residues: Probable manganese-dependent inorganic pyrophosphatase (309 aa).

The Mn(2+) site is built by H9, D13, D15, D75, H97, and D149.

It belongs to the PPase class C family. Mn(2+) serves as cofactor.

The protein localises to the cytoplasm. The catalysed reaction is diphosphate + H2O = 2 phosphate + H(+). The sequence is that of Probable manganese-dependent inorganic pyrophosphatase from Lactiplantibacillus plantarum (strain ATCC BAA-793 / NCIMB 8826 / WCFS1) (Lactobacillus plantarum).